Consider the following 322-residue polypeptide: Gas vesicle protein L (322 aa).

Positions 1-85 (MTEQSSGSAT…SEQATVDWST (85 aa)) are disordered. Residues 17-36 (ETAKQETGRKNEQPEERTVT) are compositionally biased toward basic and acidic residues. The span at 45–57 (INTTTAESETGSE) shows a compositional bias: polar residues. Over residues 58–72 (QESKAGSEQESKAGS) the composition is skewed to basic and acidic residues. Polar residues predominate over residues 73 to 85 (EQESEQATVDWST).

The protein belongs to the gas vesicle GvpF/GvpL family. In terms of assembly, gvpF to GvpM interact with each other in vitro, and may form multi-subunit complex(es). Interacts with GvpC, GvpN and GvpO.

It localises to the gas vesicle. Its function is as follows. Proteins GvpF to GvpM might be involved in nucleating gas vesicle formation. A minor component of the gas vesicle. Gas vesicles are small, hollow, gas filled protein structures that are found in several microbial planktonic microorganisms. They allow positioning of halobacteria at the optimal depth for growth in the poorly aerated, shallow brine pools of their habitat. Expression of a 9.5 kb mc-vac DNA fragment containing 2 divergently transcribed regions (gvpD-gvpE-gvpF-gvpG-gvpH-gvpI-gvpJ-gvpK-gvpL-gvpM and gvpA-gvpC-gvpN-gvpO) allows H.volcanii to produce gas vesicles. The polypeptide is Gas vesicle protein L (Haloferax mediterranei (strain ATCC 33500 / DSM 1411 / JCM 8866 / NBRC 14739 / NCIMB 2177 / R-4) (Halobacterium mediterranei)).